A 169-amino-acid chain; its full sequence is Succinate dehydrogenase cytochrome b560 subunit, mitochondrial (169 aa).

The N-terminal 29 residues, Met-1 to Pro-29, are a transit peptide targeting the mitochondrion. At Leu-30–Ser-62 the chain is on the mitochondrial matrix side. The chain crosses the membrane as a helical span at residues Leu-63–Leu-92. The Mitochondrial intermembrane segment spans residues Pro-93 to Leu-112. Residues Ile-113–Trp-137 traverse the membrane as a helical segment. Residue His-127 coordinates heme b. The Mitochondrial matrix portion of the chain corresponds to Asp-138–Ala-144. A helical membrane pass occupies residues Ile-145–Leu-166. Topologically, residues Ala-167–Leu-169 are mitochondrial intermembrane.

This sequence belongs to the cytochrome b560 family. Component of complex II composed of four subunits: the flavoprotein (FP) SDHA, iron-sulfur protein (IP) SDHB, and a cytochrome b560 composed of SDHC and SDHD. Heme b serves as cofactor.

The protein localises to the mitochondrion inner membrane. It functions in the pathway carbohydrate metabolism; tricarboxylic acid cycle. Membrane-anchoring subunit of succinate dehydrogenase (SDH) that is involved in complex II of the mitochondrial electron transport chain and is responsible for transferring electrons from succinate to ubiquinone (coenzyme Q). SDH also oxidizes malate to the non-canonical enol form of oxaloacetate, enol-oxaloacetate. Enol-oxaloacetate, which is a potent inhibitor of the succinate dehydrogenase activity, is further isomerized into keto-oxaloacetate. The chain is Succinate dehydrogenase cytochrome b560 subunit, mitochondrial (Sdhc) from Mus musculus (Mouse).